Here is a 149-residue protein sequence, read N- to C-terminus: uncharacterized protein (149 aa).

The helical transmembrane segment at 12 to 31 (FKNLVIGAVSGVAAAYFLST) threads the bilayer.

The protein localises to the membrane. This is an uncharacterized protein from Streptococcus pyogenes serotype M6 (strain ATCC BAA-946 / MGAS10394).